Here is a 39-residue protein sequence, read N- to C-terminus: Omega-theraphotoxin-Ba1a (39 aa).

Cystine bridges form between cysteine 4–cysteine 25, cysteine 8–cysteine 31, and cysteine 17–cysteine 36.

It belongs to the neurotoxin 12 (Hwtx-2) family. 06 (TXP1) subfamily. Expressed by the venom gland.

The protein localises to the secreted. In terms of biological role, inhibits voltage-gated calcium channels (Cav) in rat cerebellar granule cells. Has insecticidal activity to crickets (Acheta domesticus). Is not toxic to mice. The chain is Omega-theraphotoxin-Ba1a from Brachypelma albiceps (Mexican golden redrump tarantula).